The chain runs to 527 residues: Baicalin-beta-D-glucuronidase (527 aa).

The N-terminal stretch at M1–G25 is a signal peptide. Residue E212 is the Proton donor of the active site. E329 acts as the Nucleophile in catalysis.

The protein belongs to the glycosyl hydrolase 79 family. Homotetramer.

It carries out the reaction baicalin + H2O = baicalein + D-glucuronate + H(+). In terms of biological role, beta-glucuronidase involved in the initiation of H(2)O(2) metabolism via the production of baicalein. Unable to use glycyrrhizin, gypsogenin-3-O-D-glucuronide, luteolin-7-O-D-glucoside and apigenin-7-O-D-glucoside as substrates. In Scutellaria baicalensis (Baical skullcap), this protein is Baicalin-beta-D-glucuronidase (SGUS).